Consider the following 504-residue polypeptide: Ammonium transporter 1 member 4 (504 aa).

The next 12 membrane-spanning stretches (helical) occupy residues 12 to 32 (LIPLLSGGANATAAAAAAEYI), 55 to 75 (LLFSAYLVFAMQLGFAMLCAG), 90 to 110 (VIDAAAGGLFYYLFGFAFAFG), 136 to 156 (YFLYQWTFAIAAAGITSGSIA), 161 to 181 (FVAYLIYSSFLTGLVYPIVSH), 207 to 227 (FAGSGVVHMVGGIAGLWGALI), 251 to 271 (LVVLGTFLLWFGWYGFNPGSF), 292 to 314 (AVGRTAVTTTLAGCTAALTTLFG), 318 to 338 (IDGYWNVTDVCNGLLGGFAAI), 344 to 364 (VVEPWAALVCGFVAAWVLMGC), 377 to 397 (LEAAQLHGGCGAWGIIFTGLF), and 430 to 450 (VVQILVITGWVSVTMGTLFFI). Residue threonine 471 is modified to Phosphothreonine.

It belongs to the ammonia transporter channel (TC 1.A.11.2) family. In terms of tissue distribution, specifically expressed in pollen grains and tubes.

It localises to the cell membrane. Functionally, high affinity ammonium transporter in the plasma membrane. The polypeptide is Ammonium transporter 1 member 4 (AMT1-4) (Arabidopsis thaliana (Mouse-ear cress)).